Here is a 130-residue protein sequence, read N- to C-terminus: Small ribosomal subunit protein uS9 (130 aa).

Belongs to the universal ribosomal protein uS9 family.

The protein is Small ribosomal subunit protein uS9 of Pseudomonas syringae pv. tomato (strain ATCC BAA-871 / DC3000).